The sequence spans 55 residues: Large ribosomal subunit protein bL33 (55 aa).

The protein belongs to the bacterial ribosomal protein bL33 family.

The polypeptide is Large ribosomal subunit protein bL33 (Wigglesworthia glossinidia brevipalpis).